The following is a 432-amino-acid chain: 3-phosphoshikimate 1-carboxyvinyltransferase (432 aa).

3-phosphoshikimate-binding residues include Lys23, Ser24, and Arg28. Lys23 is a binding site for phosphoenolpyruvate. Phosphoenolpyruvate contacts are provided by Gly95 and Arg123. 4 residues coordinate 3-phosphoshikimate: Ser167, Gln169, Asp317, and Lys344. Residue Gln169 coordinates phosphoenolpyruvate. Asp317 serves as the catalytic Proton acceptor. Residues Arg348 and Arg390 each coordinate phosphoenolpyruvate.

It belongs to the EPSP synthase family. In terms of assembly, monomer.

Its subcellular location is the cytoplasm. It catalyses the reaction 3-phosphoshikimate + phosphoenolpyruvate = 5-O-(1-carboxyvinyl)-3-phosphoshikimate + phosphate. It functions in the pathway metabolic intermediate biosynthesis; chorismate biosynthesis; chorismate from D-erythrose 4-phosphate and phosphoenolpyruvate: step 6/7. Its function is as follows. Catalyzes the transfer of the enolpyruvyl moiety of phosphoenolpyruvate (PEP) to the 5-hydroxyl of shikimate-3-phosphate (S3P) to produce enolpyruvyl shikimate-3-phosphate and inorganic phosphate. This chain is 3-phosphoshikimate 1-carboxyvinyltransferase, found in Staphylococcus aureus (strain MRSA252).